The following is a 559-amino-acid chain: Potassium-transporting ATPase potassium-binding subunit (559 aa).

12 helical membrane-spanning segments follow: residues 5-25 (GFLLTASFLLILFVLARPLGV), 63-83 (LLAILTLNLLGLTVLFLMLLG), 132-152 (GLTVQNFLSAATGIAVIFALI), 170-190 (LVRITLWILLPLALLIALLFI), 250-270 (LTNMVQMLAIFLIPAALCFAF), 283-303 (LLWAMSIIFVVCVAVVMSAEV), 329-349 (VLVSSLFAVVTTAASCGAVIA), 356-376 (ALGGMVPMWLMQIGEVVFGGV), 379-399 (GLYGMLLFVLLAVFIAGLMIG), 416-436 (MTALAILITPTLVLLGTALAM), 484-504 (LLAFCMFVGRFGVIIPVMAIA), and 524-544 (GALFVGLLIGTVLLVGALTFI).

This sequence belongs to the KdpA family. The system is composed of three essential subunits: KdpA, KdpB and KdpC.

The protein resides in the cell inner membrane. Functionally, part of the high-affinity ATP-driven potassium transport (or Kdp) system, which catalyzes the hydrolysis of ATP coupled with the electrogenic transport of potassium into the cytoplasm. This subunit binds the periplasmic potassium ions and delivers the ions to the membrane domain of KdpB through an intramembrane tunnel. This chain is Potassium-transporting ATPase potassium-binding subunit, found in Citrobacter koseri (strain ATCC BAA-895 / CDC 4225-83 / SGSC4696).